Consider the following 556-residue polypeptide: Formate--tetrahydrofolate ligase 1 (556 aa).

Position 65 to 72 (65 to 72 (TPAGEGKS)) interacts with ATP.

The protein belongs to the formate--tetrahydrofolate ligase family.

The catalysed reaction is (6S)-5,6,7,8-tetrahydrofolate + formate + ATP = (6R)-10-formyltetrahydrofolate + ADP + phosphate. It participates in one-carbon metabolism; tetrahydrofolate interconversion. This chain is Formate--tetrahydrofolate ligase 1, found in Streptococcus pyogenes serotype M2 (strain MGAS10270).